Here is a 601-residue protein sequence, read N- to C-terminus: Glutathione-regulated potassium-efflux system protein KefB (601 aa).

The next 13 membrane-spanning stretches (helical) occupy residues 4 to 24, 29 to 49, 55 to 75, 87 to 107, 115 to 135, 152 to 172, 177 to 197, 207 to 227, 230 to 250, 262 to 282, 284 to 304, 324 to 344, and 356 to 376; these read SDLLTAGVMFLFAAVAAVPLA, IGAVLGYLLAGIAIGPWGLGF, EILHFSELGVVFLMFIIGLEL, IFGVGAAQVMLSAVVLAGLLM, AAVIGGIGLAMSSTAMALQLM, VLLFQDLAVIPALALVPLLAG, HFDWIKVGMKVLAFAGMLIGG, FIADSGVREVFTAATLLLVLG, LFMDALGLSMALGTFIAGVLL, AIDPFKGLLLGLFFISVGMSL, LGVLYTHLLWVAVSVIVLVAV, MQFAGVLSQGGEFAFVLFSTA, and SLLLVTVTLSMMTTPLLMKLV. The RCK N-terminal domain maps to 400-519; the sequence is KPQVIVVGFG…AGVTQFSRET (120 aa).

It belongs to the monovalent cation:proton antiporter 2 (CPA2) transporter (TC 2.A.37) family. KefB subfamily. In terms of assembly, interacts with the regulatory subunit KefG.

The protein localises to the cell inner membrane. In terms of biological role, pore-forming subunit of a potassium efflux system that confers protection against electrophiles. Catalyzes K(+)/H(+) antiport. The sequence is that of Glutathione-regulated potassium-efflux system protein KefB from Citrobacter koseri (strain ATCC BAA-895 / CDC 4225-83 / SGSC4696).